Reading from the N-terminus, the 145-residue chain is Histone H2B.7 (145 aa).

Residues 1 to 30 (MAPKAEKKPAEKKPVEEKSKAEKAPAEKKP) are compositionally biased toward basic and acidic residues. The segment at 1-53 (MAPKAEKKPAEKKPVEEKSKAEKAPAEKKPKAGKKLPKEAGAGGDKKKKMKKK) is disordered. Position 2 is a n,N,N-trimethylalanine; alternate (A2). Residue A2 is modified to N,N-dimethylalanine; alternate. Residue A2 is modified to N-methylalanine; alternate. At K4 the chain carries N6-methyllysine; partial. N6-acetyllysine is present on residues K7 and K12. K13 is modified (N6,N6-dimethyllysine). K23, K28, and K34 each carry N6-acetyllysine. K35 carries the N6-acetyllysine; partial modification. K141 is covalently cross-linked (Glycyl lysine isopeptide (Lys-Gly) (interchain with G-Cter in ubiquitin)).

The protein belongs to the histone H2B family. In terms of assembly, the nucleosome is a histone octamer containing two molecules each of H2A, H2B, H3 and H4 assembled in one H3-H4 heterotetramer and two H2A-H2B heterodimers. The octamer wraps approximately 147 bp of DNA. Can be acetylated to form H2BK6ac, H2BK11ac, H2BK22ac, H2BK27ac H2BK33ac and H2BK34ac. Post-translationally, mono-, di- or trimethylated at the N-terminus to form H2BA1me1/2/3. H2BA1me2 and H2BA1me3 may be methylated and/or acetylated to form H2BA1me2K3me1, H2BA1me2K3me1K6ac, H2BA1me2K6ac H2BA1me3K6ac, H2BA1me3K6acK11ac and H2BA1me2K3me1K6acK11ac. In terms of processing, monoubiquitinated by BRE1 to form H2BK143ub1 and deubiquitinated by UBP26. Required for heterochromatic histone H3 di- and trimethylation at H3K4me. May give a specific tag for epigenetic transcriptional activation.

It localises to the nucleus. Its subcellular location is the chromosome. Functionally, core component of nucleosome. Nucleosomes wrap and compact DNA into chromatin, limiting DNA accessibility to the cellular machineries which require DNA as a template. Histones thereby play a central role in transcription regulation, DNA repair, DNA replication and chromosomal stability. DNA accessibility is regulated via a complex set of post-translational modifications of histones, also called histone code, and nucleosome remodeling. This is Histone H2B.7 from Arabidopsis thaliana (Mouse-ear cress).